We begin with the raw amino-acid sequence, 189 residues long: Peptidyl-tRNA hydrolase (189 aa).

Tyr15 serves as a coordination point for tRNA. Catalysis depends on His20, which acts as the Proton acceptor. Residues Phe66, Asn68, and Asn114 each contribute to the tRNA site.

Belongs to the PTH family. Monomer.

Its subcellular location is the cytoplasm. The catalysed reaction is an N-acyl-L-alpha-aminoacyl-tRNA + H2O = an N-acyl-L-amino acid + a tRNA + H(+). Functionally, hydrolyzes ribosome-free peptidyl-tRNAs (with 1 or more amino acids incorporated), which drop off the ribosome during protein synthesis, or as a result of ribosome stalling. Its function is as follows. Catalyzes the release of premature peptidyl moieties from peptidyl-tRNA molecules trapped in stalled 50S ribosomal subunits, and thus maintains levels of free tRNAs and 50S ribosomes. The chain is Peptidyl-tRNA hydrolase from Streptococcus pneumoniae (strain JJA).